Consider the following 305-residue polypeptide: uncharacterized protein (305 aa).

The disordered stretch occupies residues 53-185 (SGRIGDGDDG…TGPRSSRTVG (133 aa)). Composition is skewed to basic and acidic residues over residues 95–116 (VEER…ERPT) and 128–142 (GSER…RSEG). Residues 161–171 (GNTQAPSQSAE) are compositionally biased toward polar residues. Residues 260 to 302 (CAICMSNFIKNQRLRVLPCDHRFHVGCVDKWLLGHSNKCPVCR) form an RING-type; atypical zinc finger.

This is an uncharacterized protein from Encephalitozoon cuniculi (strain GB-M1) (Microsporidian parasite).